We begin with the raw amino-acid sequence, 306 residues long: Oxygen-dependent coproporphyrinogen-III oxidase (306 aa).

Ser94 is a substrate binding site. A divalent metal cation contacts are provided by His98 and His108. The Proton donor role is filled by His108. Substrate is bound at residue 110 to 112 (NVR). The a divalent metal cation site is built by His147 and His177. The segment at 242–277 (YVEFNLVYDRGTLFGLQTGGRTESILMSMPPLVRWE) is important for dimerization. 260-262 (GGR) is a substrate binding site.

The protein belongs to the aerobic coproporphyrinogen-III oxidase family. In terms of assembly, homodimer. The cofactor is a divalent metal cation.

Its subcellular location is the cytoplasm. The catalysed reaction is coproporphyrinogen III + O2 + 2 H(+) = protoporphyrinogen IX + 2 CO2 + 2 H2O. The protein operates within porphyrin-containing compound metabolism; protoporphyrin-IX biosynthesis; protoporphyrinogen-IX from coproporphyrinogen-III (O2 route): step 1/1. In terms of biological role, involved in the heme biosynthesis. Catalyzes the aerobic oxidative decarboxylation of propionate groups of rings A and B of coproporphyrinogen-III to yield the vinyl groups in protoporphyrinogen-IX. The polypeptide is Oxygen-dependent coproporphyrinogen-III oxidase (Shewanella woodyi (strain ATCC 51908 / MS32)).